The sequence spans 147 residues: MDLAPGRRARLLVALALVVLVALAARSGAEVITLTEETFSDKIKEKDTVWFVKFCVPWCKHCKNLGTLWEDLGKVMEGADEIEIGQVDCGVSKPVCSKVDIHSYPTFKVFYEGEEVAKYKGPRNVESLKNFVSDEAEKAGEAKLQDS.

The signal sequence occupies residues 1-29 (MDLAPGRRARLLVALALVVLVALAARSGA). The Thioredoxin domain occupies 30–137 (EVITLTEETF…LKNFVSDEAE (108 aa)). Catalysis depends on nucleophile residues Cys59 and Cys62. The cysteines at positions 59 and 62 are disulfide-linked.

The protein belongs to the protein disulfide isomerase family.

In terms of biological role, acts as a protein-folding catalyst that interacts with nascent polypeptides to catalyze the formation, isomerization, and reduction or oxidation of disulfide bonds. May play a role in storage protein biogenesis. This chain is Protein disulfide isomerase-like 5-1 (PDIL5-1), found in Oryza sativa subsp. japonica (Rice).